A 419-amino-acid chain; its full sequence is Serine--tRNA ligase (419 aa).

A disordered region spans residues 45-66; sequence ADSLRAEQKAASKSVGGASPEE. 226–228 lines the L-serine pocket; the sequence is TSE. Residues 257–259 and Val273 contribute to the ATP site; that span reads RRE. Glu280 contributes to the L-serine binding site. 344–347 contacts ATP; the sequence is ELTS. Residue Thr379 participates in L-serine binding.

It belongs to the class-II aminoacyl-tRNA synthetase family. Type-1 seryl-tRNA synthetase subfamily. In terms of assembly, homodimer. The tRNA molecule binds across the dimer.

Its subcellular location is the cytoplasm. It catalyses the reaction tRNA(Ser) + L-serine + ATP = L-seryl-tRNA(Ser) + AMP + diphosphate + H(+). The catalysed reaction is tRNA(Sec) + L-serine + ATP = L-seryl-tRNA(Sec) + AMP + diphosphate + H(+). It participates in aminoacyl-tRNA biosynthesis; selenocysteinyl-tRNA(Sec) biosynthesis; L-seryl-tRNA(Sec) from L-serine and tRNA(Sec): step 1/1. In terms of biological role, catalyzes the attachment of serine to tRNA(Ser). Is also able to aminoacylate tRNA(Sec) with serine, to form the misacylated tRNA L-seryl-tRNA(Sec), which will be further converted into selenocysteinyl-tRNA(Sec). The protein is Serine--tRNA ligase of Mycobacterium ulcerans (strain Agy99).